The chain runs to 339 residues: Ketol-acid reductoisomerase (NADP(+)) (339 aa).

One can recognise a KARI N-terminal Rossmann domain in the interval 1–182 (MRVYYDRDAD…GGGRAGIIET (182 aa)). Residues 24 to 27 (YGSQ), R48, S51, T53, and 83 to 86 (DELQ) contribute to the NADP(+) site. The active site involves H108. G134 lines the NADP(+) pocket. Residues 183–328 (TFKEECETDL…AKLRGMMPWI (146 aa)) enclose the KARI C-terminal knotted domain. Mg(2+) is bound by residues D191, E195, E227, and E231. Residue S252 coordinates substrate.

It belongs to the ketol-acid reductoisomerase family. Requires Mg(2+) as cofactor.

It catalyses the reaction (2R)-2,3-dihydroxy-3-methylbutanoate + NADP(+) = (2S)-2-acetolactate + NADPH + H(+). The catalysed reaction is (2R,3R)-2,3-dihydroxy-3-methylpentanoate + NADP(+) = (S)-2-ethyl-2-hydroxy-3-oxobutanoate + NADPH + H(+). Its pathway is amino-acid biosynthesis; L-isoleucine biosynthesis; L-isoleucine from 2-oxobutanoate: step 2/4. It participates in amino-acid biosynthesis; L-valine biosynthesis; L-valine from pyruvate: step 2/4. In terms of biological role, involved in the biosynthesis of branched-chain amino acids (BCAA). Catalyzes an alkyl-migration followed by a ketol-acid reduction of (S)-2-acetolactate (S2AL) to yield (R)-2,3-dihydroxy-isovalerate. In the isomerase reaction, S2AL is rearranged via a Mg-dependent methyl migration to produce 3-hydroxy-3-methyl-2-ketobutyrate (HMKB). In the reductase reaction, this 2-ketoacid undergoes a metal-dependent reduction by NADPH to yield (R)-2,3-dihydroxy-isovalerate. The protein is Ketol-acid reductoisomerase (NADP(+)) of Methylobacterium radiotolerans (strain ATCC 27329 / DSM 1819 / JCM 2831 / NBRC 15690 / NCIMB 10815 / 0-1).